Here is an 841-residue protein sequence, read N- to C-terminus: Chitin synthase 1 (841 aa).

Residues 1 to 13 (MNPGQKQEHDQYP) are compositionally biased toward basic and acidic residues. Residues 1–98 (MNPGQKQEHD…YGEAPRRQPR (98 aa)) form a disordered region. The segment covering 76–85 (PPQPMGPPSP) has biased composition (pro residues). Helical transmembrane passes span 302-322 (WFFQAFGPVINPNVCVLIDVG), 385-405 (SVFGYISVLPGAFSAYRFTAL), 526-546 (LIFSWFALGNFYLTFYILTSA), 564-584 (ILHTILNYIYILLIIVQFILA), 602-622 (FFAILMVYMMFATIWITVVGV), 644-664 (NIIISIVSTYAMYFIASFLFF), 673-693 (FIQYIFLSPSYTNILNIYAFC), 778-798 (VISWIISNLILVVLITNENIL), and 816-836 (LWSVAGLSAIRFCGSGLYLIF).

Belongs to the chitin synthase family.

It is found in the cell membrane. It catalyses the reaction [(1-&gt;4)-N-acetyl-beta-D-glucosaminyl](n) + UDP-N-acetyl-alpha-D-glucosamine = [(1-&gt;4)-N-acetyl-beta-D-glucosaminyl](n+1) + UDP + H(+). In terms of biological role, polymerizes chitin, a structural polymer of the cell wall and septum, by transferring the sugar moiety of UDP-GlcNAc to the non-reducing end of the growing chitin polymer. The polypeptide is Chitin synthase 1 (chs1) (Phycomyces blakesleeanus (strain ATCC 8743b / DSM 1359 / FGSC 10004 / NBRC 33097 / NRRL 1555)).